Reading from the N-terminus, the 450-residue chain is Regulator of sigma-E protease RseP (450 aa).

A helical transmembrane segment spans residues 1-21; it reads MLSFLWDLASFIVALGVLITV. Zn(2+) is bound at residue H22. Residues 22–103 are Periplasmic-facing; it reads HEFGHFWVAR…VGQRAAIIAA (82 aa). Residue E23 is part of the active site. H26 contacts Zn(2+). The helical transmembrane segment at 104-124 threads the bilayer; the sequence is GPVANFIFAIFAYWLVFIIGV. At 125 to 375 the chain is on the cytoplasmic side; sequence PGVRPVVGEI…KGAGMTAELG (251 aa). PDZ domains follow at residues 127–220 and 222–309; these read VRPV…PRGP and IEPV…PKVI. Residues 376-396 traverse the membrane as a helical segment; it reads VVYYLPFLALISVNLGIINLF. Residues 397-429 lie on the Periplasmic side of the membrane; it reads PLPVLDGGHLLFLAIEKIKGGPVSERVQDFCYR. The chain crosses the membrane as a helical span at residues 430 to 450; that stretch reads IGSILLVLLMGLALFNDFSRL.

Belongs to the peptidase M50B family. Interacts with RseA; the third transmembrane domain can be cross-linked to the transmembrane domain of RseA. Requires Zn(2+) as cofactor.

Its subcellular location is the cell inner membrane. With respect to regulation, inhibited by Zn(2+) chelator 1,10-phenanthroline. A site-2 regulated intramembrane protease (S2P) that cleaves the peptide bond between 'Ala-108' and 'Cys-109' in the transmembrane region of RseA. Part of a regulated intramembrane proteolysis (RIP) cascade. Acts on DegS-cleaved RseA to release the cytoplasmic domain of RseA, residue 'Val-148' of RseA may be required for this. This provides the cell with sigma-E (RpoE) activity through the proteolysis of RseA. Can also cleave sequences in transmembrane regions of other proteins (such as LacY) as well as liberated signal peptides of beta-lactamase, OmpF, LivK, SecM, PhoA, LivJ, OmpC, Lpp and TorA, probably within the membrane. Cleaves FecR within its transmembrane region to release an N-terminal cytoplasmic fragment which binds to sigma factor FecI, allowing it to activate transcription of the fecABCDE operon which mediates ferric citrate transport. The chain is Regulator of sigma-E protease RseP (rseP) from Escherichia coli (strain K12).